A 330-amino-acid polypeptide reads, in one-letter code: Small ribosomal subunit protein uS2 (330 aa).

Belongs to the universal ribosomal protein uS2 family.

This chain is Small ribosomal subunit protein uS2, found in Rhodopseudomonas palustris (strain BisA53).